The sequence spans 92 residues: Long neurotoxin 469 (92 aa).

The N-terminal stretch at 1 to 21 (MKTLLLTLVVVTIVCLDLGDS) is a signal peptide. 5 cysteine pairs are disulfide-bonded: cysteine 24/cysteine 41, cysteine 34/cysteine 62, cysteine 47/cysteine 51, cysteine 66/cysteine 77, and cysteine 78/cysteine 83.

It belongs to the three-finger toxin family. Long-chain subfamily. Type II alpha-neurotoxin sub-subfamily. In terms of tissue distribution, expressed by the venom gland.

It localises to the secreted. Its function is as follows. Binds with high affinity to muscular (alpha-1/CHRNA1) and neuronal (alpha-7/CHRNA7) nicotinic acetylcholine receptor (nAChR) and inhibits acetylcholine from binding to the receptor, thereby impairing neuromuscular and neuronal transmission. In Drysdalia coronoides (White-lipped snake), this protein is Long neurotoxin 469.